We begin with the raw amino-acid sequence, 219 residues long: Probable GTP-binding protein EngB (219 aa).

Residues 31–205 form the EngB-type G domain; the sequence is VGVEIAFAGR…LAILNEWCHP (175 aa). GTP contacts are provided by residues 39-46, 66-70, 84-87, 151-154, and 184-186; these read GRSNAGKS, GRTQL, DLPG, TKSD, and FSS. The Mg(2+) site is built by serine 46 and threonine 68.

Belongs to the TRAFAC class TrmE-Era-EngA-EngB-Septin-like GTPase superfamily. EngB GTPase family. It depends on Mg(2+) as a cofactor.

Necessary for normal cell division and for the maintenance of normal septation. In Shewanella baltica (strain OS223), this protein is Probable GTP-binding protein EngB.